The chain runs to 486 residues: MTTFYTVVSWLIILGYWLLIAGVTLRILMKRRAVPSAMAWLLVIYILPLVGIVAYLSVGELHLGKRRAERARAMWPSTAKWLNDLKACKHIFAEENSAVASALFQLCERRQGIAGVKGNQLQLLTSSDDVMQALIRDIQLARHNIEMVFYIWQPGGMADQVAESLMAAARRGVHCRLMLDSAGSVAFFRSPWAGMMRNAGIEVVEALKVNLMRVFLRRMDLRQHRKMIMIDNYIAYTGSMNMVDPRYFKQDAGVGQWVDLMARMEGPVATAMGIVYSCDWEIETGKRLLPPPPDANIMPFEQASGHTIHTIASGPGFPEDLIHQALLTSVYAAREYLIMTTPYFVPSDDLLHAICTAAQRGVDVSIILPRKNDSLLVGWASRAFFSELLAAGVKIYQFEGGLLHTKSVLVDGELSLVGTVNLDMRSLWLNFEITLVIDDAGFGADLAEVQDDYISRSRLLDARLWVKRPFWQRVVERLFYFFSPLL.

Helical transmembrane passes span threonine 3–valine 23 and methionine 38–valine 58. PLD phosphodiesterase domains are found at residues methionine 219–arginine 246 and glutamate 399–serine 426. Residues histidine 224, lysine 226, aspartate 231, histidine 404, lysine 406, and aspartate 411 contribute to the active site.

This sequence belongs to the phospholipase D family. Cardiolipin synthase subfamily. ClsA sub-subfamily.

It localises to the cell inner membrane. The enzyme catalyses 2 a 1,2-diacyl-sn-glycero-3-phospho-(1'-sn-glycerol) = a cardiolipin + glycerol. Functionally, catalyzes the reversible phosphatidyl group transfer from one phosphatidylglycerol molecule to another to form cardiolipin (CL) (diphosphatidylglycerol) and glycerol. The sequence is that of Cardiolipin synthase A from Cronobacter sakazakii (strain ATCC BAA-894) (Enterobacter sakazakii).